We begin with the raw amino-acid sequence, 329 residues long: Ribose-phosphate pyrophosphokinase B (329 aa).

Residues Asp131, His133, and Glu146 each coordinate Mg(2+). Residues 227 to 242 (TGKIAIIIDDIADTCK) are binding of phosphoribosylpyrophosphate.

Belongs to the ribose-phosphate pyrophosphokinase family. The cofactor is Mg(2+).

Its subcellular location is the cytoplasm. It catalyses the reaction D-ribose 5-phosphate + ATP = 5-phospho-alpha-D-ribose 1-diphosphate + AMP + H(+). It participates in metabolic intermediate biosynthesis; 5-phospho-alpha-D-ribose 1-diphosphate biosynthesis; 5-phospho-alpha-D-ribose 1-diphosphate from D-ribose 5-phosphate (route I): step 1/1. This chain is Ribose-phosphate pyrophosphokinase B (prsB), found in Dictyostelium discoideum (Social amoeba).